The primary structure comprises 619 residues: Chaperone protein HscA homolog (619 aa).

This sequence belongs to the heat shock protein 70 family.

In terms of biological role, chaperone involved in the maturation of iron-sulfur cluster-containing proteins. Has a low intrinsic ATPase activity which is markedly stimulated by HscB. This chain is Chaperone protein HscA homolog, found in Shewanella frigidimarina (strain NCIMB 400).